Here is a 511-residue protein sequence, read N- to C-terminus: Alpha-amylase 2B (511 aa).

Positions 1–15 (MKFFLLLFTIGFCWA) are cleaved as a signal peptide. Gln16 is subject to Pyrrolidone carboxylic acid. 3 disulfide bridges follow: Cys43/Cys101, Cys85/Cys130, and Cys156/Cys175. Ca(2+) contacts are provided by Asn115, Arg173, and Asp182. Arg210 contributes to the chloride binding site. The active-site Nucleophile is Asp212. His216 contributes to the Ca(2+) binding site. The active-site Proton donor is the Glu248. Chloride-binding residues include Asn313 and Arg352. Intrachain disulfides connect Cys393-Cys399 and Cys465-Cys477.

The protein belongs to the glycosyl hydrolase 13 family. Monomer. It depends on Ca(2+) as a cofactor. Chloride is required as a cofactor.

It localises to the secreted. The catalysed reaction is Endohydrolysis of (1-&gt;4)-alpha-D-glucosidic linkages in polysaccharides containing three or more (1-&gt;4)-alpha-linked D-glucose units.. The protein is Alpha-amylase 2B (AMY2B) of Homo sapiens (Human).